The chain runs to 225 residues: Venom allergen 5 (225 aa).

The N-terminal stretch at 1–23 is a signal peptide; it reads MKISGFVYLILITTIINLSFSEA. Intrachain disulfides connect C27–C39, C31–C124, C49–C117, and C191–C208. In terms of domain architecture, SCP spans 69–210; it reads KQHNEFRQKV…WHRHYLVCNY (142 aa).

The protein belongs to the CRISP family. Venom allergen 5-like subfamily. As to expression, expressed by the venom gland.

It localises to the secreted. In Vespa magnifica (Hornet), this protein is Venom allergen 5.